We begin with the raw amino-acid sequence, 379 residues long: UDP-4-amino-4-deoxy-L-arabinose--oxoglutarate aminotransferase (379 aa).

K182 bears the N6-(pyridoxal phosphate)lysine mark.

This sequence belongs to the DegT/DnrJ/EryC1 family. ArnB subfamily. In terms of assembly, homodimer. The cofactor is pyridoxal 5'-phosphate.

It catalyses the reaction UDP-4-amino-4-deoxy-beta-L-arabinose + 2-oxoglutarate = UDP-beta-L-threo-pentopyranos-4-ulose + L-glutamate. Its pathway is nucleotide-sugar biosynthesis; UDP-4-deoxy-4-formamido-beta-L-arabinose biosynthesis; UDP-4-deoxy-4-formamido-beta-L-arabinose from UDP-alpha-D-glucuronate: step 2/3. The protein operates within bacterial outer membrane biogenesis; lipopolysaccharide biosynthesis. Catalyzes the conversion of UDP-4-keto-arabinose (UDP-Ara4O) to UDP-4-amino-4-deoxy-L-arabinose (UDP-L-Ara4N). The modified arabinose is attached to lipid A and is required for resistance to polymyxin and cationic antimicrobial peptides. This Salmonella heidelberg (strain SL476) protein is UDP-4-amino-4-deoxy-L-arabinose--oxoglutarate aminotransferase.